A 356-amino-acid polypeptide reads, in one-letter code: Competence protein ComGA (356 aa).

144–151 is a binding site for ATP; it reads GPTGSGKT.

It belongs to the GSP E family.

The protein resides in the cell membrane. Required for uptake of DNA by competent cells. The chain is Competence protein ComGA (comGA) from Bacillus subtilis (strain 168).